The sequence spans 486 residues: Protein nucleotidyltransferase YdiU (486 aa).

ATP-binding residues include Gly-90, Gly-92, Arg-93, Lys-113, Asp-125, Gly-126, Arg-176, and Arg-183. Asp-252 acts as the Proton acceptor in catalysis. Residues Asn-253 and Asp-262 each contribute to the Mg(2+) site. An ATP-binding site is contributed by Asp-262.

This sequence belongs to the SELO family. Requires Mg(2+) as cofactor. The cofactor is Mn(2+).

The enzyme catalyses L-seryl-[protein] + ATP = 3-O-(5'-adenylyl)-L-seryl-[protein] + diphosphate. It carries out the reaction L-threonyl-[protein] + ATP = 3-O-(5'-adenylyl)-L-threonyl-[protein] + diphosphate. The catalysed reaction is L-tyrosyl-[protein] + ATP = O-(5'-adenylyl)-L-tyrosyl-[protein] + diphosphate. It catalyses the reaction L-histidyl-[protein] + UTP = N(tele)-(5'-uridylyl)-L-histidyl-[protein] + diphosphate. The enzyme catalyses L-seryl-[protein] + UTP = O-(5'-uridylyl)-L-seryl-[protein] + diphosphate. It carries out the reaction L-tyrosyl-[protein] + UTP = O-(5'-uridylyl)-L-tyrosyl-[protein] + diphosphate. In terms of biological role, nucleotidyltransferase involved in the post-translational modification of proteins. It can catalyze the addition of adenosine monophosphate (AMP) or uridine monophosphate (UMP) to a protein, resulting in modifications known as AMPylation and UMPylation. In Pseudomonas entomophila (strain L48), this protein is Protein nucleotidyltransferase YdiU.